A 554-amino-acid polypeptide reads, in one-letter code: uncharacterized protein (554 aa).

This is an uncharacterized protein from Acidianus sp. F28 (AFV-2).